A 435-amino-acid chain; its full sequence is CUB and peptidase domain-containing protein 1 (435 aa).

The first 16 residues, 1-16 (SGFHLSFSFFRRAVCG), serve as a signal peptide directing secretion. The Peptidase S1 domain maps to 25 to 261 (IVGGTVAPIN…LKSWITGKIS (237 aa)). Cys-50 and Cys-66 are oxidised to a cystine. Catalysis depends on charge relay system residues His-65 and Asp-116. 4 disulfides stabilise this stretch: Cys-151/Cys-218, Cys-182/Cys-197, Cys-208/Cys-237, and Cys-322/Cys-341. The active-site Charge relay system is Ser-212. The CUB domain maps to 256-378 (ITGKISRSPA…SGFHLSFSFF (123 aa)).

It belongs to the peptidase S1 family. Component of the acid-insoluble organic matrix of the aragonitic skeleton (at protein level).

It localises to the secreted. In Acropora millepora (Staghorn coral), this protein is CUB and peptidase domain-containing protein 1.